Consider the following 811-residue polypeptide: Zinc finger protein 839 (811 aa).

Residues Phe-197–His-222 form a C2H2-type zinc finger. Disordered regions lie at residues Gln-329–Pro-349, Pro-455–Val-555, and Ala-612–Gly-654. The segment covering Ser-476 to Ala-485 has biased composition (basic and acidic residues). Polar residues predominate over residues Ser-501 to Ala-510.

The sequence is that of Zinc finger protein 839 (ZNF839) from Homo sapiens (Human).